Here is a 1026-residue protein sequence, read N- to C-terminus: Multidrug resistance protein MdtC (1026 aa).

The next 11 membrane-spanning stretches (helical) occupy residues 12 to 32 (VATT…FSLL), 333 to 353 (EVEQ…FIFL), 360 to 380 (LIPA…MYLC), 387 to 407 (LSLM…IVVL), 431 to 451 (VGFT…PLLL), 463 to 483 (FAVT…TLTP), 528 to 548 (WVLA…VSIP), 853 to 873 (LLLI…LYES), 897 to 917 (LFGA…IGIV), 953 to 973 (PIMM…LTHG), and 984 to 1004 (ITIV…TPVV).

This sequence belongs to the resistance-nodulation-cell division (RND) (TC 2.A.6) family. MdtC subfamily. As to quaternary structure, part of a tripartite efflux system composed of MdtA, MdtB and MdtC. MdtC forms a heteromultimer with MdtB.

The protein localises to the cell inner membrane. The protein is Multidrug resistance protein MdtC of Serratia proteamaculans (strain 568).